Reading from the N-terminus, the 1462-residue chain is DNA topoisomerase 2 (1462 aa).

ATP-binding positions include N79, N108, 136 to 138, and 149 to 156; these read SSN and GRNGYGAK. Residues 332–334 form an interaction with DNA region; that stretch reads NKK. ATP is bound at residue 365–367; sequence QTK. The Toprim domain occupies 442-556; sequence CTLILTEGDS…SLLKVPSFLV (115 aa). Mg(2+) is bound by residues E448, D525, and D527. The Topo IIA-type catalytic domain occupies 671–1131; it reads KDFVNKELIL…PTTSLWLKDL (461 aa). The active-site O-(5'-phospho-DNA)-tyrosine intermediate is the Y761. Residues 947–956 form an interaction with DNA region; the sequence is KLTSTISTSN. 2 disordered regions span residues 1040 to 1077 and 1147 to 1462; these read PMPR…SVSV and EDDR…EDDD. Residues 1056–1068 are compositionally biased toward acidic residues; sequence NDDDSEEQEDAEP. The segment covering 1167 to 1181 has biased composition (basic residues); that stretch reads PAKKPPQPRKNTKKA. The span at 1198 to 1207 shows a compositional bias: low complexity; it reads AVEAAKPAEV. Residues 1240-1250 are compositionally biased toward polar residues; that stretch reads IESSGEKSQAM. Positions 1260–1275 are enriched in basic residues; the sequence is AGKKQNNKRGGAKKKS. Acidic residues predominate over residues 1282-1300; it reads SDSDNEVNDVDDDDDDFEE. Composition is skewed to low complexity over residues 1314–1334 and 1419–1430; these read KPAA…APAA and APQPARARPQRA. A compositionally biased stretch (acidic residues) spans 1442–1462; sequence SESEEDSDEDAELSDFEEDDD.

It belongs to the type II topoisomerase family. As to quaternary structure, homodimer. Requires Mg(2+) as cofactor. The cofactor is Mn(2+). Ca(2+) serves as cofactor. Abundant in proliferative tissues.

It carries out the reaction ATP-dependent breakage, passage and rejoining of double-stranded DNA.. In terms of biological role, control of topological states of DNA by transient breakage and subsequent rejoining of DNA strands. Topoisomerase II makes double-strand breaks. This Pisum sativum (Garden pea) protein is DNA topoisomerase 2 (TOP2).